Reading from the N-terminus, the 119-residue chain is Thioredoxin H4 (119 aa).

In terms of domain architecture, Thioredoxin spans 2–115; sequence AAEEGQVIGC…LQAKIVKHTG (114 aa). Active-site nucleophile residues include C40 and C43. A disulfide bond links C40 and C43.

The protein belongs to the thioredoxin family. Plant H-type subfamily. As to quaternary structure, interacts with MDH1.

Its subcellular location is the cytoplasm. Functionally, thiol-disulfide oxidoreductase probably involved in the redox regulation of a number of cytosolic enzymes. Possesses insulin disulfide bonds reducing activity. The chain is Thioredoxin H4 (TRX4) from Arabidopsis thaliana (Mouse-ear cress).